Consider the following 883-residue polypeptide: MTLKMDRKALKEEKKKQKLEKFLNKKTTQSKISKAPKPAKNKSSSGYDPMPVEQKWNNYWLSNNLFEPQERSNKFVMCMPPPNITGSLHIGHSMMIAIQDAICRYMRLINYEVLYLPGTDHAGIATQTVVMKQLEKEKKTYNRESFLEATWKWKENYGSRILDQFKRLGTSADFSRQKFTMDAGMNKAVTEAFCSLYEKGLIYRDNKIVNWCCKLQTTLSDIEIDYLSVGKNTILKIDGRDYEFGVIYVFKYPVKFVKDGYESEGHIEVATTRPETILGDVALCANPKDARYTKYDKIIPRNPITEEELSFVFDEAAEMDLESGVLKITPAHDPIDFEIGKKNNLKNIKIFDNQNKIIIEGNYYKLKRLDARDLVVQTLKNKNLFVEKKPYEQVLPMCSRSSDLLEPVIKEQWWCSCSEMAKKAIDAVKTEQIKIYPEESKDDWYRWFENPRDWCLSRQLWWGHRIPAYKTPDGVWTIARNKEQAIQSYKKNNPLNVHYQESDFVQDEDVLDTWFSSGLWPFATLGWPNKNQDLDKYFPTSLLETGKDILFFWVGRMVMMSLELTGKVPFKKVLLHGIVRDAYGRKMSKSLGNVIDPIHVIDGASIETLLDALKLGNLTKENLINAESAVKKDFINGITVCGADALRFTLLSYMNGINDIKLDIERVKGNRKFCNKIWNAALFVKKIVDEIISSDSLSYQDLLNLDLSNEDDKLLVWLIQERNKVISTTHKAFKEYKFMSAVQSIHQFFLYDFCDVYIEIVKKIKTKKYIQACFMVLIDSIKIFSPYMPFITEEIYSQFFDNSLMYTSYPEIIHNKFSTNFKSTLSKIKAIRADIEKYGKEKVDVILDGCECFDKIDIQFISILIPNINTIKFGEGYEVKKVN.

Over residues 1 to 23 (MTLKMDRKALKEEKKKQKLEKFL) the composition is skewed to basic and acidic residues. A disordered region spans residues 1-49 (MTLKMDRKALKEEKKKQKLEKFLNKKTTQSKISKAPKPAKNKSSSGYDP). The span at 30–45 (SKISKAPKPAKNKSSS) shows a compositional bias: low complexity. Residues 82 to 92 (PNITGSLHIGH) carry the 'HIGH' region motif. Positions 586–590 (KMSKS) match the 'KMSKS' region motif. Position 589 (K589) interacts with ATP.

Belongs to the class-I aminoacyl-tRNA synthetase family.

The protein localises to the cytoplasm. The enzyme catalyses tRNA(Val) + L-valine + ATP = L-valyl-tRNA(Val) + AMP + diphosphate. In Vairimorpha ceranae (strain BRL01) (Microsporidian parasite), this protein is Probable valine--tRNA ligase, cytoplasmic.